Here is a 351-residue protein sequence, read N- to C-terminus: Glucose 1-dehydrogenase 1 (351 aa).

Position 39 (C39) interacts with Zn(2+). A substrate-binding site is contributed by T41. Zn(2+) is bound by residues H64 and E65. 2 residues coordinate substrate: E113 and E149. Position 149 (E149) interacts with Zn(2+). NADP(+) contacts are provided by residues 182-185, 265-267, and 292-294; these read AGPI, LGI, and ATN. Residue N294 participates in substrate binding.

The protein belongs to the zinc-containing alcohol dehydrogenase family. Glucose 1-dehydrogenase subfamily. It depends on Zn(2+) as a cofactor.

It catalyses the reaction D-glucose + NAD(+) = D-glucono-1,5-lactone + NADH + H(+). The catalysed reaction is D-glucose + NADP(+) = D-glucono-1,5-lactone + NADPH + H(+). Its function is as follows. Catalyzes the NAD(P)(+)-dependent oxidation of D-glucose to D-gluconate via gluconolactone. Can utilize both NAD(+) and NADP(+) as electron acceptor. Is involved in the degradation of glucose through a non-phosphorylative variant of the Entner-Doudoroff pathway. This Vulcanisaeta moutnovskia (strain 768-28) protein is Glucose 1-dehydrogenase 1.